We begin with the raw amino-acid sequence, 694 residues long: Elongation factor G (694 aa).

Residues 9–288 (DAIRNIGIMA…VIVKWLPSPL (280 aa)) enclose the tr-type G domain. GTP is bound by residues 18–25 (AHIDAGKT), 82–86 (DTPGH), and 136–139 (NKMD).

The protein belongs to the TRAFAC class translation factor GTPase superfamily. Classic translation factor GTPase family. EF-G/EF-2 subfamily.

Its subcellular location is the cytoplasm. Catalyzes the GTP-dependent ribosomal translocation step during translation elongation. During this step, the ribosome changes from the pre-translocational (PRE) to the post-translocational (POST) state as the newly formed A-site-bound peptidyl-tRNA and P-site-bound deacylated tRNA move to the P and E sites, respectively. Catalyzes the coordinated movement of the two tRNA molecules, the mRNA and conformational changes in the ribosome. In Chlamydia trachomatis serovar L2 (strain ATCC VR-902B / DSM 19102 / 434/Bu), this protein is Elongation factor G.